Here is a 645-residue protein sequence, read N- to C-terminus: COP9 signalosome complex subunit 10 (645 aa).

Acidic residues predominate over residues 1 to 45 (MSDEDNNYDDFMLSDDEGMESIEMEEETDDEDKQNIEINEDNSQD). The interval 1-63 (MSDEDNNYDD…HKQHEQGTFE (63 aa)) is disordered. The span at 46–63 (DQDRGAARHKQHEQGTFE) shows a compositional bias: basic and acidic residues. The 196-residue stretch at 348-543 (DLSFALMRYY…DLVYFGDENK (196 aa)) folds into the PCI domain.

As to quaternary structure, component of a COP9 signalosome-like (CSN) complex, composed of at least RRI1/CSN5, CSN9, RRI2/CSN10, PCI8/CSN11, CSN12 and CSI1. In the complex, it probably interacts directly with CSN12.

The protein resides in the cytoplasm. It localises to the nucleus. Its function is as follows. Component of the COP9 signalosome (CSN) complex that acts as an regulator of the ubiquitin (Ubl) conjugation pathway by mediating the deneddylation of the cullin subunit of SCF-type E3 ubiquitin-protein ligase complexes. The CSN complex is involved in the regulation of the mating pheromone response. This chain is COP9 signalosome complex subunit 10 (RRI2), found in Saccharomyces cerevisiae (strain ATCC 204508 / S288c) (Baker's yeast).